The sequence spans 660 residues: DNA ligase (660 aa).

NAD(+)-binding positions include 33 to 37 (DFVYD), 82 to 83 (SL), and E110. K112 (N6-AMP-lysine intermediate) is an active-site residue. NAD(+)-binding residues include R133, E167, K281, and K305. The Zn(2+) site is built by C396, C399, C412, and C417. The region spanning 583–660 (DENRLLAGKK…SFEDIKSYLN (78 aa)) is the BRCT domain.

This sequence belongs to the NAD-dependent DNA ligase family. LigA subfamily. It depends on Mg(2+) as a cofactor. Requires Mn(2+) as cofactor.

It catalyses the reaction NAD(+) + (deoxyribonucleotide)n-3'-hydroxyl + 5'-phospho-(deoxyribonucleotide)m = (deoxyribonucleotide)n+m + AMP + beta-nicotinamide D-nucleotide.. In terms of biological role, DNA ligase that catalyzes the formation of phosphodiester linkages between 5'-phosphoryl and 3'-hydroxyl groups in double-stranded DNA using NAD as a coenzyme and as the energy source for the reaction. It is essential for DNA replication and repair of damaged DNA. The protein is DNA ligase of Borrelia garinii subsp. bavariensis (strain ATCC BAA-2496 / DSM 23469 / PBi) (Borreliella bavariensis).